A 201-amino-acid polypeptide reads, in one-letter code: Potassium-transporting ATPase KdpC subunit (201 aa).

The helical transmembrane segment at 9-29 (ILVMLALTLITGLLYPLAMTV) threads the bilayer. 2 stretches are compositionally biased toward polar residues: residues 73 to 84 (TTAADPNDSTKT) and 91 to 101 (AANSSGSNLGP). Residues 73-103 (TTAADPNDSTKTVPAPYNAANSSGSNLGPTS) are disordered.

This sequence belongs to the KdpC family. In terms of assembly, the system is composed of three essential subunits: KdpA, KdpB and KdpC.

The protein localises to the cell inner membrane. Part of the high-affinity ATP-driven potassium transport (or Kdp) system, which catalyzes the hydrolysis of ATP coupled with the electrogenic transport of potassium into the cytoplasm. This subunit acts as a catalytic chaperone that increases the ATP-binding affinity of the ATP-hydrolyzing subunit KdpB by the formation of a transient KdpB/KdpC/ATP ternary complex. The polypeptide is Potassium-transporting ATPase KdpC subunit (Bradyrhizobium sp. (strain BTAi1 / ATCC BAA-1182)).